The chain runs to 219 residues: Cell division protein B2 (219 aa).

Its function is as follows. Part of a cell division machinery. This Sulfolobus acidocaldarius (strain ATCC 33909 / DSM 639 / JCM 8929 / NBRC 15157 / NCIMB 11770) protein is Cell division protein B2.